The chain runs to 757 residues: MDVNPTLLFLKVPAQNAISTTFPYTGDPPYSHGTGTGYTMDTVNRTHQYSEKGKWTTNTETGAPQLNPIDGPLPEDNEPSGYAQTDCVLEAMAFLEESHPGIFENSCLETMEVVQQTRVDRLTQGRQTYDWTLNRNQPAATALANTIEVFRSNGLTANESGRLIDFLKDVMESMDKEEMEITTHFQRKRRVRDNMTKKMVTQRTIGKKKQRVNKRSYLIRALTLNTMTKDAERGKLKRRAIATPGMQIRGFVYFVETLARSICEKLEQSGLPVGGNEKKAKLANVVRKMMTNSQDTELSFTITGDNTKWNENQNPRMFLAMITYITKNQPEWFRNVLSIAPIMFSNKMARLGKGYMFESKSMKLRTQIPAEMLASIDLKYFNESTRKKIEKIRPLLIDGTASLSPGMMMGMFNMLSTVLGVSILNLGQKRYTKTTYWWDGLQSSDDFALIVNAPNHEGIQAGVDRFYRTCKLVGINMSKKKSYINRTGTFEFTSFFYRYGFVANFSMELPSFGVSGINESADMSIGVTVIKNNMINNDLGPATAQMALQLFIKDYRYTYRCHRGDTQIQTRRSFELKKLWEQTRSKAGLLVSDGGPNLYNIRNLHIPEVCLKWELMDEDYQGRLCNPLNPFVSHKEIESVNNAVVMPAHGPAKSMEYDAVATTHSWIPKRNRSILNTSQRGILEDEQMYQKCCNLFEKFFPSSSYRRPVGISSMVEAMVSRARIDARIDFESGRIKKEEFAEIMKICSTIEELRRQK.

The interval 50 to 82 (SEKGKWTTNTETGAPQLNPIDGPLPEDNEPSGY) is disordered. Positions 55-64 (WTTNTETGAP) are enriched in polar residues. 2 consecutive short sequence motifs (nuclear localization signal) follow at residues 187–195 (RKRRVRDNM) and 203–216 (RTIG…NKRS). A promoter-binding site region spans residues 249-256 (RGFVYFVE). Residues 286–483 (VRKMMTNSQD…GINMSKKKSY (198 aa)) form the RdRp catalytic domain.

The protein belongs to the influenza viruses polymerase PB1 family. Influenza RNA polymerase is composed of three subunits: PB1, PB2 and PA. Interacts (via N-terminus) with PA (via C-terminus). Interacts (via C-terminus) with PB2 (via N-terminus); this interaction is essential for transcription initiation. In terms of processing, phosphorylated by host PRKCA.

The protein resides in the host nucleus. The protein localises to the host cytoplasm. The enzyme catalyses RNA(n) + a ribonucleoside 5'-triphosphate = RNA(n+1) + diphosphate. Its function is as follows. RNA-dependent RNA polymerase which is responsible for replication and transcription of virus RNA segments. The transcription of viral mRNAs occurs by a unique mechanism called cap-snatching. 5' methylated caps of cellular mRNAs are cleaved after 10-13 nucleotides by PA. In turn, these short capped RNAs are used as primers by PB1 for transcription of viral mRNAs. During virus replication, PB1 initiates RNA synthesis and copy vRNA into complementary RNA (cRNA) which in turn serves as a template for the production of more vRNAs. This Influenza A virus (strain A/Hong Kong/1/1968 H3N2) protein is RNA-directed RNA polymerase catalytic subunit.